The sequence spans 219 residues: Large ribosomal subunit protein uL3 (219 aa).

A compositionally biased stretch (polar residues) spans 133–145 (GRASHGNSRSHNV). The interval 133 to 153 (GRASHGNSRSHNVPGSIGMAQ) is disordered. At Gln153 the chain carries N5-methylglutamine.

It belongs to the universal ribosomal protein uL3 family. In terms of assembly, part of the 50S ribosomal subunit. Forms a cluster with proteins L14 and L19. Methylated by PrmB.

One of the primary rRNA binding proteins, it binds directly near the 3'-end of the 23S rRNA, where it nucleates assembly of the 50S subunit. This Paraburkholderia phymatum (strain DSM 17167 / CIP 108236 / LMG 21445 / STM815) (Burkholderia phymatum) protein is Large ribosomal subunit protein uL3.